A 314-amino-acid polypeptide reads, in one-letter code: Vacuolar membrane protein SCY_4732 (314 aa).

Residues 32-61 form a disordered region; it reads KPTSSVVSETSSKSLPSLTSSAFSTSSGTT. The chain crosses the membrane as a helical span at residues 93–113; the sequence is VYIAVGAVIGAIFISILIWWL. Phosphoserine occurs at positions 148, 254, and 274. The segment at 240 to 309 is disordered; the sequence is EERKLNLNRP…PSMFLDDVLN (70 aa). The span at 254-269 shows a compositional bias: basic and acidic residues; the sequence is SPERKEKKINSMEGYH.

The protein belongs to the PRM5 family.

The protein localises to the vacuole membrane. This chain is Vacuolar membrane protein SCY_4732, found in Saccharomyces cerevisiae (strain YJM789) (Baker's yeast).